We begin with the raw amino-acid sequence, 47 residues long: Antimicrobial peptide LCI (47 aa).

Its subcellular location is the secreted. In terms of biological role, has antibacterial activity against X.oryzae pv oryzae and R.solanacearum, but not E.coli or P.carotovorum subsp carotovorum. May bind DNA or mRNA. The sequence is that of Antimicrobial peptide LCI from Bacillus subtilis.